The chain runs to 340 residues: Ketol-acid reductoisomerase (NADP(+)) (340 aa).

The KARI N-terminal Rossmann domain maps to 3 to 182 (VTMYYEEDVE…GCARVGIIET (180 aa)). Residues 26 to 29 (YGSQ), Arg-49, Ser-53, and 83 to 86 (DELQ) each bind NADP(+). His-108 is a catalytic residue. Gly-134 serves as a coordination point for NADP(+). Positions 183-328 (TFKEETEEDL…AELRKAMPFT (146 aa)) constitute a KARI C-terminal knotted domain. Residues Asp-191, Glu-195, Glu-227, and Glu-231 each contribute to the Mg(2+) site. Ser-252 is a substrate binding site.

This sequence belongs to the ketol-acid reductoisomerase family. Requires Mg(2+) as cofactor.

It carries out the reaction (2R)-2,3-dihydroxy-3-methylbutanoate + NADP(+) = (2S)-2-acetolactate + NADPH + H(+). It catalyses the reaction (2R,3R)-2,3-dihydroxy-3-methylpentanoate + NADP(+) = (S)-2-ethyl-2-hydroxy-3-oxobutanoate + NADPH + H(+). It functions in the pathway amino-acid biosynthesis; L-isoleucine biosynthesis; L-isoleucine from 2-oxobutanoate: step 2/4. It participates in amino-acid biosynthesis; L-valine biosynthesis; L-valine from pyruvate: step 2/4. In terms of biological role, involved in the biosynthesis of branched-chain amino acids (BCAA). Catalyzes an alkyl-migration followed by a ketol-acid reduction of (S)-2-acetolactate (S2AL) to yield (R)-2,3-dihydroxy-isovalerate. In the isomerase reaction, S2AL is rearranged via a Mg-dependent methyl migration to produce 3-hydroxy-3-methyl-2-ketobutyrate (HMKB). In the reductase reaction, this 2-ketoacid undergoes a metal-dependent reduction by NADPH to yield (R)-2,3-dihydroxy-isovalerate. This Lactococcus lactis subsp. cremoris (strain MG1363) protein is Ketol-acid reductoisomerase (NADP(+)).